An 81-amino-acid chain; its full sequence is MEGAGAGSGFRKELVSRLLHLHFKDDKTKVSGDALQLMVELLKVFVVEAAVRGVRQAQAEDALRVDVDQLEKVLPQLLLDF.

Residue Met-1 is modified to N-acetylmethionine.

It belongs to the CENP-X/MHF2 family. In terms of assembly, heterodimer with CENPX, sometimes called MHF; this interaction stabilizes both partners. MHF heterodimers can assemble to form tetrameric structures. MHF also coassemble with CENPT-CENPW heterodimers at centromeres to form the tetrameric CENP-T-W-S-X complex. Forms a discrete complex with FANCM and CENPX, called FANCM-MHF; this interaction, probably mediated by direct binding between CENPS and FANCM, leads to synergistic activation of double-stranded DNA binding and strongly stimulates FANCM-mediated DNA remodeling. Recruited by FANCM to the Fanconi anemia (FA) core complex, which consists of CENPS, CENPX, FANCA, FANCB, FANCC, FANCE, FANCF, FANCG, FANCL, FANCM, FAAP24 and FAAP100. The FA core complex associates with Bloom syndrome (BLM) complex, which consists of at least BLM, DNA topoisomerase 3-alpha (TOP3A), RMI1/BLAP75, RPA1/RPA70 and RPA2/RPA32. The super complex between FA and BLM is called BRAFT.

The protein localises to the nucleus. The protein resides in the chromosome. It localises to the centromere. Its subcellular location is the kinetochore. Functionally, DNA-binding component of the Fanconi anemia (FA) core complex. Required for the normal activation of the FA pathway, leading to monoubiquitination of the FANCI-FANCD2 complex in response to DNA damage, cellular resistance to DNA cross-linking drugs, and prevention of chromosomal breakage. In complex with CENPS (MHF heterodimer), crucial cofactor for FANCM in both binding and ATP-dependent remodeling of DNA. Stabilizes FANCM. In complex with CENPS and FANCM (but not other FANC proteins), rapidly recruited to blocked forks and promotes gene conversion at blocked replication forks. In complex with CENPS, CENPT and CENPW (CENP-T-W-S-X heterotetramer), involved in the formation of a functional kinetochore outer plate, which is essential for kinetochore-microtubule attachment and faithful mitotic progression. As a component of MHF and CENP-T-W-S-X complexes, binds DNA and bends it to form a nucleosome-like structure. DNA-binding function is fulfilled in the presence of CENPS, with the following preference for DNA substates: Holliday junction &gt; double-stranded &gt; splay arm &gt; single-stranded. Does not bind DNA on its own. The chain is Centromere protein X (CENPX) from Homo sapiens (Human).